Here is a 354-residue protein sequence, read N- to C-terminus: Protein ECM8 (354 aa).

May be involved in cell wall organization and biogenesis. The polypeptide is Protein ECM8 (ECM8) (Saccharomyces cerevisiae (strain ATCC 204508 / S288c) (Baker's yeast)).